The sequence spans 243 residues: tRNA (guanine-N(1)-)-methyltransferase (243 aa).

Residues glycine 108 and 127 to 132 (LGDFVL) contribute to the S-adenosyl-L-methionine site.

It belongs to the RNA methyltransferase TrmD family. Homodimer.

The protein resides in the cytoplasm. It carries out the reaction guanosine(37) in tRNA + S-adenosyl-L-methionine = N(1)-methylguanosine(37) in tRNA + S-adenosyl-L-homocysteine + H(+). Its function is as follows. Specifically methylates guanosine-37 in various tRNAs. The sequence is that of tRNA (guanine-N(1)-)-methyltransferase from Streptococcus equi subsp. zooepidemicus (strain MGCS10565).